The sequence spans 450 residues: Tubulin alpha-1 chain (450 aa).

GTP contacts are provided by Q11, E71, G144, T145, T179, N206, and N228. E71 is a Mg(2+) binding site. The active site involves E254.

This sequence belongs to the tubulin family. Dimer of alpha and beta chains. A typical microtubule is a hollow water-filled tube with an outer diameter of 25 nm and an inner diameter of 15 nM. Alpha-beta heterodimers associate head-to-tail to form protofilaments running lengthwise along the microtubule wall with the beta-tubulin subunit facing the microtubule plus end conferring a structural polarity. Microtubules usually have 13 protofilaments but different protofilament numbers can be found in some organisms and specialized cells. Mg(2+) serves as cofactor. Post-translationally, undergoes a tyrosination/detyrosination cycle, the cyclic removal and re-addition of a C-terminal tyrosine residue by the enzymes tubulin tyrosine carboxypeptidase (TTCP) and tubulin tyrosine ligase (TTL), respectively.

Its subcellular location is the cytoplasm. The protein resides in the cytoskeleton. It catalyses the reaction GTP + H2O = GDP + phosphate + H(+). Its function is as follows. Tubulin is the major constituent of microtubules, a cylinder consisting of laterally associated linear protofilaments composed of alpha- and beta-tubulin heterodimers. Microtubules grow by the addition of GTP-tubulin dimers to the microtubule end, where a stabilizing cap forms. Below the cap, tubulin dimers are in GDP-bound state, owing to GTPase activity of alpha-tubulin. This is Tubulin alpha-1 chain (TUBA1) from Hordeum vulgare (Barley).